A 697-amino-acid polypeptide reads, in one-letter code: PAN2-PAN3 deadenylation complex subunit PAN3 (697 aa).

A C3H1-type zinc finger spans residues Thr7–Gln36. The segment at Gln40–Ala67 is disordered. Short sequence motifs (PABPC-interacting motif-2 (PAM-2)) lie at residues Leu69–Leu89 and Phe106–Pro126. The interval Phe106–Pro240 is disordered. Positions Asp119 to Asp153 are enriched in polar residues. The span at Gln172–Gln187 shows a compositional bias: low complexity. The segment covering Gly212–Phe224 has biased composition (polar residues). The interval Gln308 to Thr576 is pseudokinase domain. ATP contacts are provided by residues Arg361, Asp416–Ser423, and Ser470–Lys471. A coiled-coil region spans residues Pro577 to Tyr615. The segment at Leu616–Glu697 is knob domain.

The protein belongs to the protein kinase superfamily. PAN3 family. In terms of assembly, homodimer. Forms a heterotrimer with a catalytic subunit PAN2 to form the poly(A)-nuclease (PAN) deadenylation complex. Interacts (via PAM-2 motif) with poly(A)-binding protein PAB1 (via PABC domain), conferring substrate specificity of the enzyme complex.

The protein resides in the cytoplasm. Regulatory subunit of the poly(A)-nuclease (PAN) deadenylation complex, one of two cytoplasmic mRNA deadenylases involved in mRNA turnover. PAN specifically shortens poly(A) tails of RNA and the activity is stimulated by poly(A)-binding protein PAB1. PAN deadenylation is followed by rapid degradation of the shortened mRNA tails by the CCR4-NOT complex. Deadenylated mRNAs are then degraded by two alternative mechanisms, namely exosome-mediated 3'-5' exonucleolytic degradation, or deadenylation-dependent mRNA decaping and subsequent 5'-3' exonucleolytic degradation by XRN1. May also be involved in post-transcriptional maturation of mRNA poly(A) tails. PAN3 acts as a positive regulator for PAN activity, recruiting the catalytic subunit PAN2 to mRNA via its interaction with RNA and with PAB1. The polypeptide is PAN2-PAN3 deadenylation complex subunit PAN3 (Candida albicans (strain SC5314 / ATCC MYA-2876) (Yeast)).